The sequence spans 271 residues: N-acylmannosamine 1-dehydrogenase (271 aa).

20 to 44 (VTGAAGGIGRATVEAYLREGASVVA) contributes to the NAD(+) binding site. Serine 153 is a substrate binding site. Tyrosine 166 (proton acceptor) is an active-site residue.

The protein belongs to the short-chain dehydrogenases/reductases (SDR) family.

It catalyses the reaction an N-acyl-D-mannosamine + NAD(+) = an N-acyl-D-mannosaminolactone + NADH + H(+). Its function is as follows. Acts on acetyl-D-mannosamine and glycolyl-D-mannosamine. The sequence is that of N-acylmannosamine 1-dehydrogenase from Flavobacterium sp. (strain 141-8).